We begin with the raw amino-acid sequence, 300 residues long: MQTDLSDSSFFNHKSVMTDEILASLEHYPLIHNNQLKGIDATLGGGGHSYHLLRKYSDLHIIGLDQDPFARKSASKKLDEFKNRIDIRAANFADFEPKEKVSFVIADLGVNSNQIDDPKRGFSFQKDGPLDMRMNPFLEVDAEKLIETLQEKDLANLIYKYGDERLSRKIARKIKMDLKVNGKYSGTKELAYSIAGCFPPKQRYKKIHPATRTFQALRIAVNKEIEVLEKFLQIVPDWLLPGGIISIISFHSLEDRLVKSSFKNDQRLKNLTKKPITPSEQEVEINKRARSGKLRVAQLN.

S-adenosyl-L-methionine contacts are provided by residues 46 to 48, Asp-65, Phe-92, Asp-107, and Gln-114; that span reads GGH.

Belongs to the methyltransferase superfamily. RsmH family.

It is found in the cytoplasm. It carries out the reaction cytidine(1402) in 16S rRNA + S-adenosyl-L-methionine = N(4)-methylcytidine(1402) in 16S rRNA + S-adenosyl-L-homocysteine + H(+). Its function is as follows. Specifically methylates the N4 position of cytidine in position 1402 (C1402) of 16S rRNA. The chain is Ribosomal RNA small subunit methyltransferase H from Prochlorococcus marinus (strain MIT 9312).